We begin with the raw amino-acid sequence, 683 residues long: MSTRREMRAEAQAFIDNLKPLQHPNSQKFYLNGSRPDLKVAMRQIYQSDTLIGGTAEAPVYEKNPPITVYDCAGPYSDPEADIDVRRGLVKLRSEWIAERSDTQELEQVSSGFTQQRLADEGLDHLRFEQLPKPRRALEGRVVTQMHYARRGIITPEMEYVALRENMARETVTEEVLNQRAPGESFGAKLGEPITPEFVRQELAAGRAILPLNINHPEAEPMIIGRNFLVKVNANIGNSAVTSSIEEEVEKLVWATRWGADTVMDLSTGRYIHETREWIIRNSPVPIGTVPIYQALEKVNGIAEDLTWEIFRDTLIEQAEQGVDYFTIHAGVLLRYVPMTAKRLTGIVSRGGSIMAKWCLSHHKENFLYEHFDEICQLCAAYDVSLSLGDGMRPGSIADANDEAQFAELETLGELVKKAWQYDVQTIIEGPGHIPMQLIKENMDKQLELCDEAPFYTLGPQTTDIAPGYDHFTSGIGAAMIAWYGCAMLCYVTPKEHLGLPNKEDVKQGLIAYKIAAHAGDVAKGHPGAQIRDNALSKARFEFRWEDQYNLGLDPDTARAYHDESLPQESAKVAHFCSMCGPKFCSMKITQEVREYAAAQATDVREIEVEQIDVTASAPKADIQQGMAQMSAQFKQSGSELYHSAIRQSPGVESTSLESTSLESTVLESTSLESTALEKAKEV.

Substrate-binding positions include Asn-235, Met-264, Tyr-293, His-329, 349 to 351, 390 to 393, and Glu-429; these read SRG and DGMR. His-433 is a binding site for Zn(2+). A substrate-binding site is contributed by Tyr-456. His-497 provides a ligand contact to Zn(2+). [4Fe-4S] cluster-binding residues include Cys-577, Cys-580, and Cys-585. The interval 647 to 683 is disordered; it reads RQSPGVESTSLESTSLESTVLESTSLESTALEKAKEV. Residues 653–675 show a composition bias toward low complexity; sequence ESTSLESTSLESTVLESTSLEST.

The protein belongs to the ThiC family. As to quaternary structure, homodimer. Requires [4Fe-4S] cluster as cofactor.

The catalysed reaction is 5-amino-1-(5-phospho-beta-D-ribosyl)imidazole + S-adenosyl-L-methionine = 4-amino-2-methyl-5-(phosphooxymethyl)pyrimidine + CO + 5'-deoxyadenosine + formate + L-methionine + 3 H(+). Its pathway is cofactor biosynthesis; thiamine diphosphate biosynthesis. Catalyzes the synthesis of the hydroxymethylpyrimidine phosphate (HMP-P) moiety of thiamine from aminoimidazole ribotide (AIR) in a radical S-adenosyl-L-methionine (SAM)-dependent reaction. In Shewanella loihica (strain ATCC BAA-1088 / PV-4), this protein is Phosphomethylpyrimidine synthase.